A 200-amino-acid polypeptide reads, in one-letter code: NADH-quinone oxidoreductase subunit C (200 aa).

The protein belongs to the complex I 30 kDa subunit family. In terms of assembly, NDH-1 is composed of 14 different subunits. Subunits NuoB, C, D, E, F, and G constitute the peripheral sector of the complex.

It is found in the cell inner membrane. It catalyses the reaction a quinone + NADH + 5 H(+)(in) = a quinol + NAD(+) + 4 H(+)(out). Functionally, NDH-1 shuttles electrons from NADH, via FMN and iron-sulfur (Fe-S) centers, to quinones in the respiratory chain. The immediate electron acceptor for the enzyme in this species is believed to be ubiquinone. Couples the redox reaction to proton translocation (for every two electrons transferred, four hydrogen ions are translocated across the cytoplasmic membrane), and thus conserves the redox energy in a proton gradient. The chain is NADH-quinone oxidoreductase subunit C from Ralstonia nicotianae (strain ATCC BAA-1114 / GMI1000) (Ralstonia solanacearum).